We begin with the raw amino-acid sequence, 757 residues long: Transmembrane channel-like protein 1 (757 aa).

Positions 1–74 (MLQIQVEEKE…RRRLRRGAEE (74 aa)) are disordered. The Cytoplasmic segment spans residues 1–176 (MLQIQVEEKE…KIKAIESQFG (176 aa)). The segment covering 8–23 (EKEEDTEESSSEEEED) has biased composition (acidic residues). S30 is subject to Phosphoserine. Residue T38 is modified to Phosphothreonine. The segment covering 43-54 (NEDDPEPEPEDE) has biased composition (acidic residues). The required for interaction with CIB2 stretch occupies residues 81–130 (EELERLKALLDENRQMIATVKCKPWKMEKKIEVLKEAKKFVSENEGALGK). S122 is modified (phosphoserine). The helical transmembrane segment at 177–214 (SSVASYFLFLRWMYGVNMVLFVLTFSLIMLPEYLWGLP) threads the bilayer. Residues 215–265 (YGSLPRKTVPRAEEASAANFGVLYDFNGLAQYSVLFYGYYDNKRTIGWLNF) are Extracellular-facing. A helical transmembrane segment spans residues 266-297 (RLPLSYFLVGIMCIGYSFLVVLKAMTKNIGDD). The segment at 298-352 (GGGDDNTFNFSWKVFCSWDYLIGNPETADNKFNSITMNFKEAIIEERAAQVEENI) is required for interaction with CIB2. Residues 298–353 (GGGDDNTFNFSWKVFCSWDYLIGNPETADNKFNSITMNFKEAIIEERAAQVEENIH) are Cytoplasmic-facing. S308 is modified (phosphoserine). The chain crosses the membrane as a helical span at residues 354 to 384 (LIRFLRFLANFFVFLTLGASGYLIFWAVKRS). The Extracellular segment spans residues 385–396 (QEFAQQDPDTLG). T394 carries the post-translational modification Phosphothreonine. A helical transmembrane segment spans residues 397–424 (WWEKNEMNMVMSLLGMFCPTLFDLFAEL). Residues 425 to 428 (EDYH) lie on the Cytoplasmic side of the membrane. A helical membrane pass occupies residues 429 to 463 (PLIALKWLLGRIFALLLGNLYVFILALMDEINNKI). The Extracellular segment spans residues 464–512 (EEEKLVKANITLWEANMIKAYNESLSGLSGNTTGAPFFVHPADVPRGPC). A helical membrane pass occupies residues 513–550 (WETMVGQEFVRLTVSDVLTTYVTILIGDFLRACFVRFC). At 551 to 569 (NYCWCWDLEYGYPSYTEFD) the chain is on the cytoplasmic side. A helical transmembrane segment spans residues 570 to 590 (ISGNVLALIFNQGMIWMGSFF). At 591 to 593 (APS) the chain is on the extracellular side. Residues 594 to 616 (LPGINILRLHTSMYFQCWAVMCC) traverse the membrane as a helical segment. The Cytoplasmic segment spans residues 617 to 630 (NVPEARVFKASRSN). A helical membrane pass occupies residues 631–654 (NFYLGMLLLILFLSTMPVLYMIVS). The Extracellular portion of the chain corresponds to 655–697 (LPPSFDCGPFSGKNRMFEVIGETLEHDFPSWMAKILRQLSNPG). Residues 698 to 731 (LVIAVILVMVLTIYYLNATAKGQKAANLDLKKKM) form a helical membrane-spanning segment. Residues 732–757 (KQQALENKMRNKKMAAARAAAAAGGQ) lie on the Cytoplasmic side of the membrane.

It belongs to the TMC family. As to quaternary structure, forms the MET channel composed of TMC dimer (TMC1 or TMC2), TMIE, TOMT, CIB (CIB2 or CIB3), LHFPL5 and PCDH15. Interacts with PIEZO1 and PIEZO2; the interaction may be part of the MET complex. The interaction of TMC1 and TMC2 with TOMT is required for the transportation of TMC1/2 into the stereocilia of hair cells. Interacts (via N-terminus) with both isoforms CD1 and CD3 of PCDH15. Can form a heterodimer with TMC2, TMC5 or TMC7. Detected in cochlear inner and outer hair cells and in neurosensory epithelia of the vestibular end organs. Also expressed in cortex, cerebellum, eye, colon, ovary and testis.

It is found in the cell membrane. The enzyme catalyses Ca(2+)(in) = Ca(2+)(out). Functionally, pore-forming subunit of the mechanotransducer (MET) non-selective cation channel complex located at the tips of stereocilia of cochlear hair cells and that mediates sensory transduction in the auditory system. The MET complex is composed of two dimeric pore-forming ion-conducting transmembrane TMC (TMC1 or TMC2) subunits, several auxiliary proteins including LHFPL5, TMIE, CIB2/3 and TOMT, the tip-link PCDH15, and possibly the PIEZO subunits. MET channel is activated by tension in the tip-link extending from the side wall of one stereocilium to the tip of the adjacent shorter stereocilium, where the channel is located. TMC1 MET channel is highly permeable to calcium and likely transports monovalent cations. Also involved in vestibular hair cells transduction current. The chain is Transmembrane channel-like protein 1 from Mus musculus (Mouse).